The chain runs to 476 residues: Glutamate--tRNA ligase (476 aa).

The 'HIGH' region signature appears at 9-19 (PSPTGTLHIGT). The short motif at 248–252 (KLSKR) is the 'KMSKS' region element. K251 contacts ATP.

This sequence belongs to the class-I aminoacyl-tRNA synthetase family. Glutamate--tRNA ligase type 1 subfamily. In terms of assembly, monomer.

The protein resides in the cytoplasm. It catalyses the reaction tRNA(Glu) + L-glutamate + ATP = L-glutamyl-tRNA(Glu) + AMP + diphosphate. Functionally, catalyzes the attachment of glutamate to tRNA(Glu) in a two-step reaction: glutamate is first activated by ATP to form Glu-AMP and then transferred to the acceptor end of tRNA(Glu). This is Glutamate--tRNA ligase from Prochlorococcus marinus (strain MIT 9303).